Reading from the N-terminus, the 453-residue chain is Sodium/alanine symporter AgcS (453 aa).

At 1-17 (MDFVSLVNTVNSFVWGP) the chain is on the extracellular side. The helical transmembrane segment at 18–32 (YMLVLLLGTGIFLTL) threads the bilayer. Over 33 to 67 (RLGFMQIHTLPYALKLAFSKHQDETSEGDISHFQA) the chain is Cytoplasmic. Residues 68–89 (LMTALAATIGTGNIAGVATAYV) traverse the membrane as a helical segment. Thr75 is a binding site for D-alanine. Residues Thr75 and Gly79 each contribute to the L-alanine site. Asn80 lines the D-alanine pocket. Residues 90 to 92 (LGG) lie on the Extracellular side of the membrane. The helical transmembrane segment at 93–111 (PGAIFWMWVTAFFGMATKY) threads the bilayer. Residues 112-148 (AEAVLAIKYRTVDDNGEMAGGPMYFLEKGLPDHGLGK) are Cytoplasmic-facing. A helical transmembrane segment spans residues 149–179 (ILGVAFAFFGAFAAFGIGNMVQTNSVADAVA). Residue Gln170 participates in D-alanine binding. L-alanine is bound at residue Gln170. Residues 180 to 186 (SNFGVDP) lie on the Extracellular side of the membrane. A helical membrane pass occupies residues 187–202 (LITGFVLAIFTAAVIL). Residues 203-206 (GGIK) are Cytoplasmic-facing. Residues 207–233 (SIGKATGIIVPFMAVFYILAGLVILAM) traverse the membrane as a helical segment. Topologically, residues 234–258 (NIGYIIPAFGTIFSSAFNFSAGFGA) are extracellular. Residues 259 to 274 (LIGTAIMWGVKRGVFS) form a helical membrane-spanning segment. 273 to 274 (FS) lines the D-alanine pocket. L-alanine is bound at residue 273 to 276 (FSNE). The Cytoplasmic portion of the chain corresponds to 275 to 300 (NEAGLGSAPIAAAAAKTDHPGRQALV). A helical membrane pass occupies residues 301-322 (SMTGTFLDTIVVCTITGLVLTI). The Extracellular segment spans residues 323–350 (AGLKAFPGLTDLTGASLTAASFDALMPM). The chain crosses the membrane as a helical span at residues 351 to 378 (GGLIVTIGLVFFAYSTVLGWSYYGEKCF). The Cytoplasmic portion of the chain corresponds to 379–386 (EYLIGTKG). A helical membrane pass occupies residues 387 to 403 (IRLYRIAFVLVAFWGAT). Over 404 to 408 (ASLPL) the chain is Extracellular. The helical transmembrane segment at 409–430 (VWNIADTLNGAMAIPNLIGLLL) threads the bilayer. The Cytoplasmic portion of the chain corresponds to 431-453 (LSGVVVSETKAFNEIRKNEAKNA).

This sequence belongs to the alanine or glycine:cation symporter (AGCS) (TC 2.A.25) family.

The protein localises to the cell membrane. The enzyme catalyses D-alanine(in) + Na(+)(in) = D-alanine(out) + Na(+)(out). The catalysed reaction is L-alanine(in) + Na(+)(in) = L-alanine(out) + Na(+)(out). It carries out the reaction glycine(in) + Na(+)(in) = glycine(out) + Na(+)(out). Its function is as follows. Catalyzes the sodium-dependent uptake of extracellular D-alanine and L-alanine. Can also transport glycine. Binds glycine and both enantiomers of alanine, while strictly excluding other amino acids. This chain is Sodium/alanine symporter AgcS, found in Methanococcus maripaludis (strain DSM 14266 / JCM 13030 / NBRC 101832 / S2 / LL).